We begin with the raw amino-acid sequence, 299 residues long: Tyrosine recombinase XerC (299 aa).

A Core-binding (CB) domain is found at 1–86 (MRNELLDFLE…AIRSLFKFLT (86 aa)). A Tyr recombinase domain is found at 107 to 293 (KLPEFLSIEE…NQARMTEVYN (187 aa)). Active-site residues include R146, K170, H245, R248, and H271. The active-site O-(3'-phospho-DNA)-tyrosine intermediate is the Y280.

Belongs to the 'phage' integrase family. XerC subfamily. In terms of assembly, forms a cyclic heterotetrameric complex composed of two molecules of XerC and two molecules of XerD.

The protein localises to the cytoplasm. In terms of biological role, site-specific tyrosine recombinase, which acts by catalyzing the cutting and rejoining of the recombining DNA molecules. The XerC-XerD complex is essential to convert dimers of the bacterial chromosome into monomers to permit their segregation at cell division. It also contributes to the segregational stability of plasmids. In Natranaerobius thermophilus (strain ATCC BAA-1301 / DSM 18059 / JW/NM-WN-LF), this protein is Tyrosine recombinase XerC.